Here is a 294-residue protein sequence, read N- to C-terminus: Cytidine deaminase (294 aa).

CMP/dCMP-type deaminase domains are found at residues 48–168 (DEDA…FGPK) and 186–294 (LTGD…VLLA). 89-91 (NME) is a substrate binding site. His-102 lines the Zn(2+) pocket. Glu-104 (proton donor) is an active-site residue. Positions 129 and 132 each coordinate Zn(2+).

It belongs to the cytidine and deoxycytidylate deaminase family. As to quaternary structure, homodimer. Zn(2+) serves as cofactor.

The catalysed reaction is cytidine + H2O + H(+) = uridine + NH4(+). It carries out the reaction 2'-deoxycytidine + H2O + H(+) = 2'-deoxyuridine + NH4(+). In terms of biological role, this enzyme scavenges exogenous and endogenous cytidine and 2'-deoxycytidine for UMP synthesis. In Escherichia coli O17:K52:H18 (strain UMN026 / ExPEC), this protein is Cytidine deaminase.